Consider the following 428-residue polypeptide: Phosphoglucosamine mutase (428 aa).

The active-site Phosphoserine intermediate is Ser96. Mg(2+) is bound by residues Ser96, Asp229, Asp231, and Asp233. Ser96 is subject to Phosphoserine.

The protein belongs to the phosphohexose mutase family. The cofactor is Mg(2+). Post-translationally, activated by phosphorylation.

The enzyme catalyses alpha-D-glucosamine 1-phosphate = D-glucosamine 6-phosphate. In terms of biological role, catalyzes the conversion of glucosamine-6-phosphate to glucosamine-1-phosphate. The protein is Phosphoglucosamine mutase of Thermotoga neapolitana (strain ATCC 49049 / DSM 4359 / NBRC 107923 / NS-E).